Reading from the N-terminus, the 203-residue chain is Urease accessory protein UreG (203 aa).

14–21 lines the GTP pocket; it reads GPVGSGKT.

Belongs to the SIMIBI class G3E GTPase family. UreG subfamily. As to quaternary structure, homodimer. UreD, UreF and UreG form a complex that acts as a GTP-hydrolysis-dependent molecular chaperone, activating the urease apoprotein by helping to assemble the nickel containing metallocenter of UreC. The UreE protein probably delivers the nickel.

It is found in the cytoplasm. Its function is as follows. Facilitates the functional incorporation of the urease nickel metallocenter. This process requires GTP hydrolysis, probably effectuated by UreG. This Sinorhizobium medicae (strain WSM419) (Ensifer medicae) protein is Urease accessory protein UreG.